The primary structure comprises 185 residues: Elongation factor P (185 aa).

The protein belongs to the elongation factor P family.

It localises to the cytoplasm. It participates in protein biosynthesis; polypeptide chain elongation. Functionally, involved in peptide bond synthesis. Stimulates efficient translation and peptide-bond synthesis on native or reconstituted 70S ribosomes in vitro. Probably functions indirectly by altering the affinity of the ribosome for aminoacyl-tRNA, thus increasing their reactivity as acceptors for peptidyl transferase. The protein is Elongation factor P of Anoxybacillus flavithermus (strain DSM 21510 / WK1).